A 176-amino-acid chain; its full sequence is Thiol:disulfide interchange protein HelX (176 aa).

Residues 1–19 form the signal peptide; that stretch reads MAKPLMFLPLLVMAGFVGA. In terms of domain architecture, Thioredoxin spans 35 to 172; it reads ALAGKEAPAV…ITKKIDPLLA (138 aa). Cysteines 75 and 78 form a disulfide.

Belongs to the thioredoxin family. DsbE subfamily.

The protein localises to the periplasm. In terms of biological role, required for disulfide bond formation in some periplasmic proteins. Also acts as a disulfide oxidoreductase in cytochromes c biogenesis. The cysteines of apocytochromes c must be in the reduced state for covalent linkage between the two moieties to occur. This Rhodobacter capsulatus (strain ATCC BAA-309 / NBRC 16581 / SB1003) protein is Thiol:disulfide interchange protein HelX (helX).